We begin with the raw amino-acid sequence, 502 residues long: Probable malate:quinone oxidoreductase (502 aa).

Belongs to the MQO family. FAD serves as cofactor.

It catalyses the reaction (S)-malate + a quinone = a quinol + oxaloacetate. It functions in the pathway carbohydrate metabolism; tricarboxylic acid cycle; oxaloacetate from (S)-malate (quinone route): step 1/1. This is Probable malate:quinone oxidoreductase from Synechococcus sp. (strain CC9902).